The following is a 273-amino-acid chain: Large ribosomal subunit protein uL2 (273 aa).

Residues 221–263 (RGTAMNPVDHPHGGGEGRNFGKHPVSPWGLKTKGKKTRRNKRT) are disordered. The segment covering 252 to 263 (TKGKKTRRNKRT) has biased composition (basic residues).

It belongs to the universal ribosomal protein uL2 family. As to quaternary structure, part of the 50S ribosomal subunit. Forms a bridge to the 30S subunit in the 70S ribosome.

One of the primary rRNA binding proteins. Required for association of the 30S and 50S subunits to form the 70S ribosome, for tRNA binding and peptide bond formation. It has been suggested to have peptidyltransferase activity; this is somewhat controversial. Makes several contacts with the 16S rRNA in the 70S ribosome. In Buchnera aphidicola subsp. Cinara cedri (strain Cc), this protein is Large ribosomal subunit protein uL2.